A 515-amino-acid chain; its full sequence is Organic cation/carnitine transporter 5 (515 aa).

At 1-43 the chain is on the cytoplasmic side; the sequence is MADSLAPLLPTHIEEDEDTSSPLTFDKILEKSLSDFGFSQFLQ. The helical transmembrane segment at 44 to 64 threads the bilayer; it reads IVLVGLALTFDSQQIFITVFT. The Extracellular portion of the chain corresponds to 65 to 124; that stretch reads DAYPTWHCLDHTICNPATTDICKIPRSAWDWDGGFKGKSVISEFDLECSSSFLRSLPSST. A helical membrane pass occupies residues 125–145; the sequence is FYVGSIVGGVVLAMIPDGSLG. At 146-149 the chain is on the cytoplasmic side; the sequence is RKQL. A helical transmembrane segment spans residues 150-172; that stretch reads LFFSSFAMSLTGISIFLSSNIWI. The Extracellular segment spans residues 173–177; that stretch reads YSFLK. A helical membrane pass occupies residues 178–195; it reads FVIGFARSQTGTYALVLI. 195-202 serves as a coordination point for ATP; that stretch reads ISERISTK. Over 196-208 the chain is Cytoplasmic; sequence SERISTKWRPRAT. Residues 209–229 form a helical membrane-spanning segment; that stretch reads MVPFTLFVLGFMSLSGIAYLV. Residues 230–235 lie on the Extracellular side of the membrane; that stretch reads RHASWK. The chain crosses the membrane as a helical span at residues 236 to 256; the sequence is VLYLCTSIPAGIHSIFIYFFA. The Cytoplasmic segment spans residues 257–320; it reads LESPRWLHLE…LFIIKWAFRR (64 aa). A helical transmembrane segment spans residues 321 to 341; the sequence is VTLVMIIMFGLGMSYYGVPLA. At 342 to 350 the chain is on the extracellular side; it reads VRDIKVNIY. The chain crosses the membrane as a helical span at residues 351-371; that stretch reads MSEALNAMVELPTFVVTPILL. At 372–379 the chain is on the cytoplasmic side; the sequence is EQFSRRSS. Residues 380-400 traverse the membrane as a helical segment; the sequence is VLVNCLIGGASGVLCFVMSLY. Over 401-411 the chain is Extracellular; the sequence is GRTKIAFALEL. A helical membrane pass occupies residues 412 to 432; it reads GSFFCARIGFNLMAIYLVELF. The Cytoplasmic portion of the chain corresponds to 433–441; sequence PTCVRNSAT. Residues 442–462 form a helical membrane-spanning segment; that stretch reads MMLRQALVVGGACCPLIASLG. The Extracellular portion of the chain corresponds to 463–467; the sequence is RNVPS. A helical transmembrane segment spans residues 468–488; that stretch reads LSFAVFGFAMSGLGLFALLLP. Residues 489–515 lie on the Cytoplasmic side of the membrane; it reads ETKGLSLCDTMEEQEQRDQALKTSHSC.

Belongs to the major facilitator (TC 2.A.1) superfamily. Organic cation transporter (TC 2.A.1.19) family. As to expression, mostly expressed in leaves and siliques, and, to a lower extent, in roots, stems and flowers.

The protein localises to the vacuole membrane. Functionally, high affinity carnitine transporter involved in the active cellular uptake of carnitine. Also transports organic cations. The polypeptide is Organic cation/carnitine transporter 5 (OCT5) (Arabidopsis thaliana (Mouse-ear cress)).